The sequence spans 122 residues: MIQEQTYLKVADNSGGKIVKCIKVLNGTNKKYANIGEIIKVVVKTANFKSKIKKSQVLKAMIIRSKTGIKRLDGTIIKFNDNSVILLNNNEQIISTRVFGIILRELKNEKFAKLISLSNEII.

It belongs to the universal ribosomal protein uL14 family. In terms of assembly, part of the 50S ribosomal subunit. Forms a cluster with proteins L3 and L19. In the 70S ribosome, L14 and L19 interact and together make contacts with the 16S rRNA in bridges B5 and B8.

Binds to 23S rRNA. Forms part of two intersubunit bridges in the 70S ribosome. The polypeptide is Large ribosomal subunit protein uL14 (Carsonella ruddii (strain PV)).